The primary structure comprises 1117 residues: Guanylate cyclase D (1117 aa).

Residues 1-66 form the signal peptide; the sequence is MAGLQQGCHF…ADSLSLLAWA (66 aa). Residues 67–479 lie on the Extracellular side of the membrane; it reads RETFTLGVLG…CIRGVQPLGS (413 aa). C121 and C149 are joined by a disulfide. Residues 480–500 form a helical membrane-spanning segment; the sequence is LLTLTIACVLALVGGFLAYFI. Residues 501–1117 lie on the Cytoplasmic side of the membrane; the sequence is RLGLQQLRLL…RKSGEAGPGP (617 aa). The segment at 529–557 is disordered; that stretch reads TPSRRRPHVDSGSESRSVVDGGSPRSVTQ. One can recognise a Protein kinase domain in the interval 541-812; it reads SESRSVVDGG…PSLDQIYTQF (272 aa). Residues 874–915 form an interaction with NCALD region; that stretch reads MGTTVEPEYFDQVTIYFSDIVGFTTISALSEPIEVVGFLNDL. In terms of domain architecture, Guanylate cyclase spans 887-1017; that stretch reads TIYFSDIVGF…DTVNTASRME (131 aa). The disordered stretch occupies residues 1096–1117; that stretch reads GFAKARQGLAEPRKSGEAGPGP.

This sequence belongs to the adenylyl cyclase class-4/guanylyl cyclase family. Interacts (via the catalytic domain) with NCALD. Found in a subset of olfactory neurons in the main olfactory epithelium.

The protein localises to the cell projection. It localises to the cilium membrane. The catalysed reaction is GTP = 3',5'-cyclic GMP + diphosphate. With respect to regulation, activated by Ca(2+). Its function is as follows. Functions as an olfactory receptor activated by urine odorants, uroguanylin and guanylin and as well by the volatile semiochemicals carbon disulfide (CS2) and carbon dioxide (CO2). Has guanylate cyclase activity upon binding of the ligand. Activation of GUCY2D neurons leads to the cGMP-dependent activation of the CNGA3 channels, membrane depolarization and an increase in action potential frequency. Signaling pathways activated by GUCY2D may trigger social behaviors such as acquisition of food preference. The polypeptide is Guanylate cyclase D (Mus musculus (Mouse)).